The sequence spans 115 residues: MTDPLLKCTTRHIRIFTAITQNNNLIEDSDHLTMDLDPDNEFLWENQAIEKVQNRFSELVESQVGQELSDYVLRKIGSDLESYIRQMLQAGEVSYNPDSRVLNYSMGLPRTPELL.

The protein belongs to the complex I NdhM subunit family. As to quaternary structure, NDH-1 can be composed of about 15 different subunits; different subcomplexes with different compositions have been identified which probably have different functions.

It is found in the cellular thylakoid membrane. The catalysed reaction is a plastoquinone + NADH + (n+1) H(+)(in) = a plastoquinol + NAD(+) + n H(+)(out). The enzyme catalyses a plastoquinone + NADPH + (n+1) H(+)(in) = a plastoquinol + NADP(+) + n H(+)(out). In terms of biological role, NDH-1 shuttles electrons from an unknown electron donor, via FMN and iron-sulfur (Fe-S) centers, to quinones in the respiratory and/or the photosynthetic chain. The immediate electron acceptor for the enzyme in this species is believed to be plastoquinone. Couples the redox reaction to proton translocation, and thus conserves the redox energy in a proton gradient. Cyanobacterial NDH-1 also plays a role in inorganic carbon-concentration. This is NAD(P)H-quinone oxidoreductase subunit M from Prochlorococcus marinus (strain SARG / CCMP1375 / SS120).